Reading from the N-terminus, the 265-residue chain is Polyprenol monophosphomannose synthase (265 aa).

Basic and acidic residues predominate over residues 1–10 (MSVPGEREQG). Positions 1–21 (MSVPGEREQGAGEDPATVRPT) are disordered.

This sequence belongs to the glycosyltransferase 2 family. In terms of assembly, interacts with Lnt (also called Ppm2, AC A0QZ13) upon coexpression in E.coli, which increases the PPM synthase activity of this protein.

It localises to the cytoplasm. It carries out the reaction a di-trans,poly-cis-dolichyl phosphate + GDP-alpha-D-mannose = a di-trans,poly-cis-dolichyl beta-D-mannosyl phosphate + GDP. Its function is as follows. Transfers mannose from GDP-mannose to lipid acceptors to form polyprenol monophosphomannose (PPM); catalytic activity in vitro is enhanced by Lnt (AC A0QZ13). PMM is an alkai-stable sugar donor which adds mannose-phosphate residues to triacylated-PIM2, eventually leading to generation of the cell wall glycolipid lipoglycan modulins lipoarabinomannan (LAM) and lipomannan (LM). The polypeptide is Polyprenol monophosphomannose synthase (Mycolicibacterium smegmatis (strain ATCC 700084 / mc(2)155) (Mycobacterium smegmatis)).